Consider the following 189-residue polypeptide: Nucleoside diphosphate kinase 6 (189 aa).

ATP contacts are provided by K19, F68, R96, T102, R116, and N126. H129 (pros-phosphohistidine intermediate) is an active-site residue.

Belongs to the NDK family. The cofactor is Mg(2+).

It carries out the reaction a 2'-deoxyribonucleoside 5'-diphosphate + ATP = a 2'-deoxyribonucleoside 5'-triphosphate + ADP. The enzyme catalyses a ribonucleoside 5'-diphosphate + ATP = a ribonucleoside 5'-triphosphate + ADP. Its function is as follows. Major role in the synthesis of nucleoside triphosphates other than ATP. The ATP gamma phosphate is transferred to the NDP beta phosphate via a ping-pong mechanism, using a phosphorylated active-site intermediate. This Mus musculus (Mouse) protein is Nucleoside diphosphate kinase 6 (Nme6).